The sequence spans 350 residues: Probable dTDP-glucose 4,6-dehydratase (350 aa).

7–13 is an NAD(+) binding site; the sequence is GGAGFIG. Position 132 (Thr-132) interacts with substrate. The Proton donor role is filled by Asp-133. Catalysis depends on proton acceptor residues Glu-134 and Tyr-157.

It belongs to the NAD(P)-dependent epimerase/dehydratase family. dTDP-glucose dehydratase subfamily. Requires NAD(+) as cofactor.

The enzyme catalyses dTDP-alpha-D-glucose = dTDP-4-dehydro-6-deoxy-alpha-D-glucose + H2O. Its pathway is carbohydrate biosynthesis; dTDP-L-rhamnose biosynthesis. In Sinorhizobium fredii (strain NBRC 101917 / NGR234), this protein is Probable dTDP-glucose 4,6-dehydratase.